Reading from the N-terminus, the 725-residue chain is D-(-)-3-hydroxybutyrate oligomer hydrolase (725 aa).

An N-terminal signal peptide occupies residues 1 to 22; that stretch reads MNTTRDANRLRQRASLSGLALA. The active-site Charge relay system is Ser-322.

The protein belongs to the D-(-)-3-hydroxybutyrate oligomer hydrolase family.

The protein resides in the secreted. It carries out the reaction (3R)-hydroxybutanoate dimer + H2O = 2 (R)-3-hydroxybutanoate + H(+). It functions in the pathway lipid metabolism; butanoate metabolism. In terms of biological role, participates in the degradation of poly-3-hydroxybutyrate (PHB). It works downstream of poly(3-hydroxybutyrate) depolymerase, hydrolyzing D(-)-3-hydroxybutyrate oligomers of various length (3HB-oligomers) into 3HB-monomers. In Ralstonia nicotianae (strain ATCC BAA-1114 / GMI1000) (Ralstonia solanacearum), this protein is D-(-)-3-hydroxybutyrate oligomer hydrolase.